The sequence spans 590 residues: Ankyrin repeat domain-containing protein 13A (590 aa).

ANK repeat units follow at residues 40 to 69 (RGRT…DVTK) and 73 to 102 (QGWT…YHNT). The residue at position 205 (serine 205) is a Phosphoserine. 4 UIM domains span residues 483–502 (EDYE…SSRS), 519–538 (TYDA…STEG), 549–568 (RFDN…LEEW), and 574–590 (EEEA…LTDK). Serine 586 is subject to Phosphoserine.

Interacts (via the UIM 3 and 4 repeats) with EGFR (ubiquitinated); the interaction is direct, inhibited by ANKRD13A monoubiquitination and may regulate EGFR internalization. Monoubiquitinated, inhibits interaction with ubiquitinated EGFR.

It is found in the cell membrane. Its subcellular location is the late endosome. Functionally, ubiquitin-binding protein that specifically recognizes and binds 'Lys-63'-linked ubiquitin. Does not bind 'Lys-48'-linked ubiquitin. Positively regulates the internalization of ligand-activated EGFR by binding to the Ub moiety of ubiquitinated EGFR at the cell membrane. This is Ankyrin repeat domain-containing protein 13A (ANKRD13A) from Homo sapiens (Human).